Reading from the N-terminus, the 622-residue chain is Palmitoyltransferase ZDHHC17 (622 aa).

The Cytoplasmic portion of the chain corresponds to Met-1–Lys-294. Residues Met-1–Val-295 are necessary and sufficient for interaction with DNAJC5 and SNAP25. ANK repeat units lie at residues Thr-41–Pro-76, Glu-79–Gln-108, Leu-113–Leu-142, Glu-146–Met-175, Asn-179–Leu-209, His-214–Ala-243, and Lys-247–Tyr-276. 2 helical membrane-spanning segments follow: residues Val-295–Ile-315 and Asp-316–Ser-336. At Lys-337–Ala-347 the chain is on the lumenal side. The helical transmembrane segment at Leu-348 to Phe-368 threads the bilayer. Residues Trp-369–Asp-371 are Cytoplasmic-facing. Residues Leu-372–Phe-392 traverse the membrane as a helical segment. The Lumenal portion of the chain corresponds to Gly-393–Arg-470. The 51-residue stretch at Ile-427–Phe-477 folds into the DHHC domain. Cys-457 acts as the S-palmitoyl cysteine intermediate in catalysis. Residues Tyr-471 to Val-491 form a helical membrane-spanning segment. Topologically, residues Ser-492 to Gly-506 are cytoplasmic. A helical membrane pass occupies residues Phe-507–Leu-526. At Asn-527–Val-529 the chain is on the lumenal side. A helical membrane pass occupies residues Phe-530–Thr-552. The Cytoplasmic segment spans residues Thr-553 to Val-622.

It belongs to the DHHC palmitoyltransferase family. AKR/ZDHHC17 subfamily. As to quaternary structure, interacts (via ANK repeats) with numerous proteins (via the consensus sequence motif [VIAP]-[VIT]-x-x-Q-P). Interacts (via ANK repeats) with CLIP3. Interacts (via ANK repeats) with HTT. Interacts (via ANK repeats) with DNAJC5 (via C-terminus). Interacts (via ANK repeats) with MAP6. Interacts (via ANK repeats) with SNAP23. Interacts (via ANK repeats) with SNAP25. Interacts (via ANK repeats) with EVL. Interacts with SPRED1 and SPRED3. Interacts with GPM6A and OPTN. May interact (via ANK repeats) with SPRED2. May interact with NTRK1; may regulate its localization and function. Autopalmitoylated. Autopalmitoylation has a regulatory role in ZDHHC17-mediated Mg(2+) transport.

The protein resides in the golgi apparatus membrane. It is found in the cytoplasmic vesicle membrane. It localises to the presynaptic cell membrane. It carries out the reaction L-cysteinyl-[protein] + hexadecanoyl-CoA = S-hexadecanoyl-L-cysteinyl-[protein] + CoA. The enzyme catalyses L-cysteinyl-[protein] + tetradecanoyl-CoA = S-tetradecanoyl-L-cysteinyl-[protein] + CoA. It catalyses the reaction L-cysteinyl-[protein] + octadecanoyl-CoA = S-octadecanoyl-L-cysteinyl-[protein] + CoA. Functionally, palmitoyltransferase that catalyzes the addition of palmitate onto various protein substrates and is involved in a variety of cellular processes. Has no stringent fatty acid selectivity and in addition to palmitate can also transfer onto target proteins myristate from tetradecanoyl-CoA and stearate from octadecanoyl-CoA. Palmitoyltransferase specific for a subset of neuronal proteins, including SNAP25, DLG4/PSD95, GAD2, SYT1 and HTT. Also palmitoylates neuronal protein GPM6A as well as SPRED1 and SPRED3. Could also play a role in axonogenesis through the regulation of NTRK1 and the downstream ERK1/ERK2 signaling cascade. May be involved in the sorting or targeting of critical proteins involved in the initiating events of endocytosis at the plasma membrane. May play a role in Mg(2+) transport. Could also palmitoylate DNAJC5 and regulate its localization to the Golgi membrane. Palmitoylates CASP6, thereby preventing its dimerization and subsequent activation. The sequence is that of Palmitoyltransferase ZDHHC17 from Rattus norvegicus (Rat).